The following is a 404-amino-acid chain: Phosphopentomutase (404 aa).

Mn(2+)-binding residues include D10, D303, H308, D344, H345, and H356.

Belongs to the phosphopentomutase family. Mn(2+) is required as a cofactor.

Its subcellular location is the cytoplasm. The enzyme catalyses 2-deoxy-alpha-D-ribose 1-phosphate = 2-deoxy-D-ribose 5-phosphate. It catalyses the reaction alpha-D-ribose 1-phosphate = D-ribose 5-phosphate. Its pathway is carbohydrate degradation; 2-deoxy-D-ribose 1-phosphate degradation; D-glyceraldehyde 3-phosphate and acetaldehyde from 2-deoxy-alpha-D-ribose 1-phosphate: step 1/2. Its function is as follows. Isomerase that catalyzes the conversion of deoxy-ribose 1-phosphate (dRib-1-P) and ribose 1-phosphate (Rib-1-P) to deoxy-ribose 5-phosphate (dRib-5-P) and ribose 5-phosphate (Rib-5-P), respectively. In Shewanella sp. (strain W3-18-1), this protein is Phosphopentomutase.